The primary structure comprises 144 residues: Small ribosomal subunit protein uS11 (144 aa).

Residues 123–144 (EDVTPVPTDSTRRKGSRRGRRL) are disordered. The segment covering 135-144 (RKGSRRGRRL) has biased composition (basic residues).

The protein belongs to the universal ribosomal protein uS11 family.

The protein is Small ribosomal subunit protein uS11 (RPS14) of Trypanosoma brucei brucei.